A 414-amino-acid chain; its full sequence is Succinylornithine transaminase (414 aa).

K260 carries the post-translational modification N6-(pyridoxal phosphate)lysine.

It belongs to the class-III pyridoxal-phosphate-dependent aminotransferase family. AstC subfamily. Pyridoxal 5'-phosphate serves as cofactor.

The enzyme catalyses N(2)-succinyl-L-ornithine + 2-oxoglutarate = N-succinyl-L-glutamate 5-semialdehyde + L-glutamate. Its pathway is amino-acid degradation; L-arginine degradation via AST pathway; L-glutamate and succinate from L-arginine: step 3/5. Functionally, catalyzes the transamination of N(2)-succinylornithine and alpha-ketoglutarate into N(2)-succinylglutamate semialdehyde and glutamate. Can also act as an acetylornithine aminotransferase. This is Succinylornithine transaminase from Yersinia pseudotuberculosis serotype O:1b (strain IP 31758).